A 110-amino-acid polypeptide reads, in one-letter code: Large ribosomal subunit protein uL22 (110 aa).

Belongs to the universal ribosomal protein uL22 family. In terms of assembly, part of the 50S ribosomal subunit.

Its function is as follows. This protein binds specifically to 23S rRNA; its binding is stimulated by other ribosomal proteins, e.g. L4, L17, and L20. It is important during the early stages of 50S assembly. It makes multiple contacts with different domains of the 23S rRNA in the assembled 50S subunit and ribosome. In terms of biological role, the globular domain of the protein is located near the polypeptide exit tunnel on the outside of the subunit, while an extended beta-hairpin is found that lines the wall of the exit tunnel in the center of the 70S ribosome. The protein is Large ribosomal subunit protein uL22 of Maridesulfovibrio salexigens (strain ATCC 14822 / DSM 2638 / NCIMB 8403 / VKM B-1763) (Desulfovibrio salexigens).